The sequence spans 861 residues: Protein HIR1 (861 aa).

WD repeat units follow at residues 14–54, 74–113, 132–171, 174–213, 227–270, 295–337, and 341–382; these read EHKS…KFAS, RHAG…TQPM, AHDN…KVKR, VHQS…ETSF, PLTT…SPVS, STTD…PLIV, and ICGK…EAIP. The segment at 450–471 is disordered; the sequence is KRAQLTGTGNHTDNNTTSKAEP. Over residues 455–466 the composition is skewed to low complexity; sequence TGTGNHTDNNTT.

It belongs to the WD repeat HIR1 family.

It localises to the nucleus. Required for replication-independent chromatin assembly and for the periodic repression of histone gene transcription during the cell cycle. The protein is Protein HIR1 (HIR1) of Kluyveromyces lactis (strain ATCC 8585 / CBS 2359 / DSM 70799 / NBRC 1267 / NRRL Y-1140 / WM37) (Yeast).